The chain runs to 159 residues: Aspartate carbamoyltransferase regulatory chain (159 aa).

Residues C113, C118, C142, and C145 each coordinate Zn(2+).

This sequence belongs to the PyrI family. In terms of assembly, contains catalytic and regulatory chains. It depends on Zn(2+) as a cofactor.

In terms of biological role, involved in allosteric regulation of aspartate carbamoyltransferase. This Saccharolobus islandicus (strain Y.N.15.51 / Yellowstone #2) (Sulfolobus islandicus) protein is Aspartate carbamoyltransferase regulatory chain.